A 279-amino-acid polypeptide reads, in one-letter code: Acetyl-coenzyme A carboxylase carboxyl transferase subunit beta (279 aa).

Positions 23 to 279 constitute a CoA carboxyltransferase N-terminal domain; the sequence is LWWKCEECGA…IVRLAGMLKV (257 aa). The Zn(2+) site is built by Cys-27, Cys-30, Cys-46, and Cys-49. The C4-type zinc-finger motif lies at 27–49; that stretch reads CEECGAMIHKKQLEDHVYTCSDC.

This sequence belongs to the AccD/PCCB family. In terms of assembly, acetyl-CoA carboxylase is a heterohexamer composed of biotin carboxyl carrier protein (AccB), biotin carboxylase (AccC) and two subunits each of ACCase subunit alpha (AccA) and ACCase subunit beta (AccD). Zn(2+) is required as a cofactor.

The protein localises to the cytoplasm. The catalysed reaction is N(6)-carboxybiotinyl-L-lysyl-[protein] + acetyl-CoA = N(6)-biotinyl-L-lysyl-[protein] + malonyl-CoA. It participates in lipid metabolism; malonyl-CoA biosynthesis; malonyl-CoA from acetyl-CoA: step 1/1. Functionally, component of the acetyl coenzyme A carboxylase (ACC) complex. Biotin carboxylase (BC) catalyzes the carboxylation of biotin on its carrier protein (BCCP) and then the CO(2) group is transferred by the transcarboxylase to acetyl-CoA to form malonyl-CoA. In Chlorobium limicola (strain DSM 245 / NBRC 103803 / 6330), this protein is Acetyl-coenzyme A carboxylase carboxyl transferase subunit beta.